The chain runs to 426 residues: Glutamate-1-semialdehyde 2,1-aminomutase (426 aa).

K265 is modified (N6-(pyridoxal phosphate)lysine).

Belongs to the class-III pyridoxal-phosphate-dependent aminotransferase family. HemL subfamily. Homodimer. The cofactor is pyridoxal 5'-phosphate.

It localises to the cytoplasm. It carries out the reaction (S)-4-amino-5-oxopentanoate = 5-aminolevulinate. It participates in porphyrin-containing compound metabolism; protoporphyrin-IX biosynthesis; 5-aminolevulinate from L-glutamyl-tRNA(Glu): step 2/2. This Actinobacillus pleuropneumoniae serotype 3 (strain JL03) protein is Glutamate-1-semialdehyde 2,1-aminomutase.